The primary structure comprises 130 residues: Fluoride-specific ion channel FluC (130 aa).

Helical transmembrane passes span 3–23 (LVFL…YFVG), 38–58 (LGTF…GHLA), 67–87 (FGIF…SYGL), and 102–122 (ISYV…GWFL). Na(+) is bound by residues Gly77 and Thr80.

Belongs to the fluoride channel Fluc/FEX (TC 1.A.43) family.

Its subcellular location is the cell inner membrane. It carries out the reaction fluoride(in) = fluoride(out). Its activity is regulated as follows. Na(+) is not transported, but it plays an essential structural role and its presence is essential for fluoride channel function. In terms of biological role, fluoride-specific ion channel. Important for reducing fluoride concentration in the cell, thus reducing its toxicity. The sequence is that of Fluoride-specific ion channel FluC from Helicobacter pylori (strain J99 / ATCC 700824) (Campylobacter pylori J99).